Reading from the N-terminus, the 520-residue chain is MGPTRKPNVCSRLSRRALGCFSRDAGVVQRTNLGILRALVCQESTKFKNVWTTHSRSPIAYERGRIYFDNYRRCVSSVASEPRKLYEMPKCSKSEKIEDALLWECPVGDILPNSSDYKSSLIALTAHNWLLRISATTGKILEKIYLAPYCKFRYLSWDTPQEVIAVKSAQNRGSAVARQAGIQQHVLLYLAVFRVLPFSLVGILEINKKIFGNVTDATLSHGILIVMYSSGLVRLYSFQTIAEQFMQQKLDLGCACRWGGTTGTVGEAPFGIPCNIKITDMPPLLFEVSSLENAFQIGGHPWHYIVTPNKKKQKGVFHICALKDNSLAKNGIQEMDCCSLESDWIYFHPDASGRIIHVGPNQVKVLKLTEIENNSSQHQISEDFVILANRENHKNENVLTVTASGRVVKKSFNLLDDDPEQETFKIVDYEDELDLLSVVAVTQIDAEGKAHLDFHCNEYGTLLKSIPLVESWDVTYSHEVYFDRDLVLHIEQKPNRVFSCYVYQMICDTGEEEETINRSC.

The next 2 membrane-spanning stretches (helical) occupy residues 186–206 (VLLY…ILEI) and 222–242 (GILI…QTIA).

As to quaternary structure, interacts with DDB1, CUL4A and CUL4B. As to expression, ubiquitously expressed.

The protein localises to the membrane. The protein resides in the nucleus. It is found in the nucleolus. The protein operates within protein modification; protein ubiquitination. May function as a substrate receptor for CUL4-DDB1 E3 ubiquitin-protein ligase complex. The sequence is that of DDB1- and CUL4-associated factor 17 (DCAF17) from Homo sapiens (Human).